Reading from the N-terminus, the 501-residue chain is Cytochrome P450 7A1 (501 aa).

A helical transmembrane segment spans residues 4-24 (IFWIWGICLSVCCCLWLILGL). Cys-441 provides a ligand contact to heme.

The protein belongs to the cytochrome P450 family. It depends on heme as a cofactor. In terms of tissue distribution, detected in liver.

Its subcellular location is the endoplasmic reticulum membrane. It localises to the microsome membrane. The enzyme catalyses cholesterol + reduced [NADPH--hemoprotein reductase] + O2 = 7alpha-hydroxycholesterol + oxidized [NADPH--hemoprotein reductase] + H2O + H(+). It carries out the reaction 4beta-hydroxycholesterol + reduced [NADPH--hemoprotein reductase] + O2 = 4beta,7alpha-dihydroxycholesterol + oxidized [NADPH--hemoprotein reductase] + H2O + H(+). It catalyses the reaction lathosterol + reduced [NADPH--hemoprotein reductase] + O2 = 7alpha,8alpha-epoxy-5alpha-cholestan-3beta-ol + oxidized [NADPH--hemoprotein reductase] + H2O + H(+). The catalysed reaction is lathosterol + reduced [NADPH--hemoprotein reductase] + O2 = 5alpha-cholestan-7-oxo-3beta-ol + oxidized [NADPH--hemoprotein reductase] + H2O + H(+). The enzyme catalyses 7-dehydrocholesterol + reduced [NADPH--hemoprotein reductase] + O2 = 7-oxocholesterol + oxidized [NADPH--hemoprotein reductase] + H2O + H(+). It carries out the reaction (24S)-hydroxycholesterol + reduced [NADPH--hemoprotein reductase] + O2 = (24S)-7alpha-dihydroxycholesterol + oxidized [NADPH--hemoprotein reductase] + H2O + H(+). It catalyses the reaction (24R)-hydroxycholesterol + reduced [NADPH--hemoprotein reductase] + O2 = (24R)-7alpha-dihydroxycholesterol + oxidized [NADPH--hemoprotein reductase] + H2O + H(+). The protein operates within lipid metabolism; bile acid biosynthesis. Its pathway is steroid metabolism; cholesterol degradation. Its function is as follows. A cytochrome P450 monooxygenase involved in the metabolism of endogenous cholesterol and its oxygenated derivatives (oxysterols). Mechanistically, uses molecular oxygen inserting one oxygen atom into a substrate, and reducing the second into a water molecule, with two electrons provided by NADPH via cytochrome P450 reductase (CPR; NADPH-ferrihemoprotein reductase). Functions as a critical regulatory enzyme of bile acid biosynthesis and cholesterol homeostasis. Catalyzes the hydroxylation of carbon hydrogen bond at 7-alpha position of cholesterol, a rate-limiting step in cholesterol catabolism and bile acid biosynthesis. 7-alpha hydroxylates several oxysterols, including 4beta-hydroxycholesterol and 24-hydroxycholesterol. Catalyzes the oxidation of the 7,8 double bond of 7-dehydrocholesterol and lathosterol with direct and predominant formation of the 7-keto derivatives. This is Cytochrome P450 7A1 (CYP7A1) from Oryctolagus cuniculus (Rabbit).